The following is a 153-amino-acid chain: Endoribonuclease YbeY (153 aa).

The Zn(2+) site is built by His-114, His-118, and His-124.

This sequence belongs to the endoribonuclease YbeY family. It depends on Zn(2+) as a cofactor.

The protein resides in the cytoplasm. Functionally, single strand-specific metallo-endoribonuclease involved in late-stage 70S ribosome quality control and in maturation of the 3' terminus of the 16S rRNA. This is Endoribonuclease YbeY from Finegoldia magna (strain ATCC 29328 / DSM 20472 / WAL 2508) (Peptostreptococcus magnus).